The sequence spans 511 residues: DELLA protein RGL1 (511 aa).

Basic and acidic residues predominate over residues 1 to 11 (MKREHNHRESS). Residues 1-20 (MKREHNHRESSAGEGGSSSM) are disordered. Residues 32–36 (DELLV) carry the DELLA motif motif. The LEXLE motif motif lies at 54–58 (LEQLE). A VHYNP motif motif is present at residues 73–77 (VHYNP). The GRAS domain occupies 143–506 (LDSQETGVRL…RPLIATSAWR (364 aa)). Residues 150–204 (VRLVHALLACAEAVQQNNLKLADALVKHVGLLASSQAGAMRKVATYFAEGLARRI) form a leucine repeat I (LRI) region. Positions 157–161 (LACAE) match the LxCxE motif motif. The interval 223-288 (QIHFYESCPY…NGPPDFRLTG (66 aa)) is VHIID. The VHIID signature appears at 254-258 (VHVID). The tract at residues 298–330 (EVGWKLGQLASTIGVNFEFKSIALNNLSDLKPE) is leucine repeat II (LRII). Residues 341–427 (VAVNSVFELH…ELFLGRQILN (87 aa)) are PFYRE. The LXXLL motif signature appears at 349-353 (LHRLL). The interval 430–506 (ACEGEDRVER…RPLIATSAWR (77 aa)) is SAW.

Belongs to the GRAS family. DELLA subfamily. As to quaternary structure, interacts directly with the GID2/SLY1 component of the SCF(GID2) complex. Interacts (via N-terminus) with GID1A, GID1B and GID1B (via N-terminus). Interacts with the BOI proteins BOI, BRG1, BRG2 and BRG3. Binds to and coactivates GAF1/IDD2 and ENY/IDD1. Phosphorylated. In terms of processing, may be ubiquitinated, as suggested by its interaction with GID2. Ubiquitination is however unsure since in contrast to other DELLA proteins, it is not ubiquitinated and degraded upon GA application. Nevertheless, ubiquitination may be triggered by other processes. In terms of tissue distribution, predominantly expressed in germinating seeds and flowers and siliques. Highly expressed in inflorescences and weakly or not expressed in rosette leaves, etiolated seedlings, siliques, mature stems and roots. RGA and GAI transcripts were detected at slightly varying levels in all tissues examined. RGL2 signal was undetected, and RGL3 signal was very weak in all tissues examined (rosette leaves, seedlings, inflorescences, and siliques) except inflorescences. In the flower, it is expressed in developing ovules as well as in developing anthers throughout microspore development.

It localises to the nucleus. Functionally, probable transcriptional regulator that acts as a repressor of the gibberellin (GA) signaling pathway. No effect of the BOI proteins on its stability. Probably acts by participating in large multiprotein complexes that repress transcription of GA-inducible genes. Has overlapping but distinct roles in GA signaling compared to RGA and GAI. Regulates the floral development. May also participate in seed germination and in ovule and anther development. Its activity is probably regulated by other phytohormones such as auxin and ethylene. This Arabidopsis thaliana (Mouse-ear cress) protein is DELLA protein RGL1 (RGL1).